The primary structure comprises 408 residues: Cytochrome bc1 complex Rieske iron-sulfur subunit (408 aa).

The next 3 helical transmembrane spans lie at 56–76 (VTFWLVLGIIGGLGFLATYIF), 98–118 (MLGITSGLCILSLGFAVVLYV), and 162–182 (LIMGLAGGGAVLAGLTIIAPM). The region spanning 293–390 (HGPRNAVMLI…ITVDEEGYLI (98 aa)) is the Rieske domain. Positions 333, 335, 352, and 355 each coordinate [2Fe-2S] cluster. Cysteines 338 and 354 form a disulfide.

This sequence belongs to the Rieske iron-sulfur protein family. In terms of assembly, the cytochrome bc1 complex is composed of a cytochrome b (QcrB), the Rieske iron-sulfur protein (QcrA) and a diheme cytochrome c (QcrC) subunit. The bc1 complex forms a supercomplex with cytochrome c oxidase (cytochrome aa3). [2Fe-2S] cluster is required as a cofactor.

The protein resides in the cell membrane. Iron-sulfur subunit of the cytochrome bc1 complex, an essential component of the respiratory electron transport chain required for ATP synthesis. The bc1 complex catalyzes the oxidation of menaquinol and the reduction of cytochrome c in the respiratory chain. The bc1 complex operates through a Q-cycle mechanism that couples electron transfer to generation of the proton gradient that drives ATP synthesis. The sequence is that of Cytochrome bc1 complex Rieske iron-sulfur subunit (qcrA) from Corynebacterium glutamicum (strain ATCC 13032 / DSM 20300 / JCM 1318 / BCRC 11384 / CCUG 27702 / LMG 3730 / NBRC 12168 / NCIMB 10025 / NRRL B-2784 / 534).